Here is a 289-residue protein sequence, read N- to C-terminus: NFIL3 like protein (289 aa).

Residues 1 to 27 are disordered; sequence MDVGFSGLPDVSQSHSKTLWGARGRGP. The bZIP domain maps to 42–105; that stretch reads DTVYWEKRRK…GLLPLTGGPR (64 aa). The tract at residues 48 to 64 is basic motif; the sequence is KRRKNNEAAKRSREKRR. The leucine-zipper stretch occupies residues 70-91; sequence IEGRLAALMEENALLKGELKAL.

This sequence belongs to the bZIP family. NFIL3 subfamily.

It localises to the nucleus. This chain is NFIL3 like protein, found in Homo sapiens (Human).